Reading from the N-terminus, the 173-residue chain is Thiol-disulfide oxidoreductase ResA (173 aa).

A helical; Signal-anchor for type II membrane protein membrane pass occupies residues 10–29 (VIILLILSGAVGFTLYQGFF). The Thioredoxin domain occupies 35-173 (MQIGKEAPNF…LEGYLKKITP (139 aa)). C73 and C76 form a disulfide bridge.

This sequence belongs to the thioredoxin family. ResA subfamily.

It localises to the cell membrane. Its pathway is protein modification; cytochrome c assembly. In terms of biological role, thiol-disulfide oxidoreductase which is required in disulfide reduction during c-type cytochrome synthesis. May accept reducing equivalents from CcdA, leading to breakage of disulfide bonds in apocytochrome c; following this reduction heme can be covalently attached. In Bacillus thuringiensis (strain Al Hakam), this protein is Thiol-disulfide oxidoreductase ResA.